The chain runs to 216 residues: Uracil phosphoribosyltransferase (216 aa).

GTP is bound by residues Arg32, Arg41, Leu75–Ile78, and Lys77. Position 85 (Arg85) interacts with 5-phospho-alpha-D-ribose 1-diphosphate. Residue Arg102 participates in GTP binding. Arg110 lines the 5-phospho-alpha-D-ribose 1-diphosphate pocket. A GTP-binding site is contributed by Arg131. 5-phospho-alpha-D-ribose 1-diphosphate contacts are provided by residues Asp137 and Asp137–Ser145. Tyr201 is a binding site for D-ribose 5-phosphate. Uracil-binding positions include Leu202 and Gly207–Phe209. A 5-phospho-alpha-D-ribose 1-diphosphate-binding site is contributed by Asp208.

It belongs to the UPRTase family. It depends on Mg(2+) as a cofactor.

It carries out the reaction UMP + diphosphate = 5-phospho-alpha-D-ribose 1-diphosphate + uracil. The protein operates within pyrimidine metabolism; UMP biosynthesis via salvage pathway; UMP from uracil: step 1/1. With respect to regulation, allosterically activated by GTP. Its function is as follows. Catalyzes the conversion of uracil and 5-phospho-alpha-D-ribose 1-diphosphate (PRPP) to UMP and diphosphate. The polypeptide is Uracil phosphoribosyltransferase (FUR1) (Lachancea kluyveri (Yeast)).